Consider the following 174-residue polypeptide: MTLILGIDPGSRITGFGVVRETARGCEYVASGCIRTGNGPLHERLQVVFRSVREVIRTHGPTTLSIEQVFMARNADSALKLGQARGAAIVAAMEEGLSVAEYTASQVKQAVVGTGGADKQQVQMMVMHLLKLTQKPQIDASDALAIALCHAHTQQSLVPHGLVGARRRGGRLRL.

Residues Asp8, Glu67, and Asp139 contribute to the active site. Positions 8, 67, and 139 each coordinate Mg(2+).

This sequence belongs to the RuvC family. In terms of assembly, homodimer which binds Holliday junction (HJ) DNA. The HJ becomes 2-fold symmetrical on binding to RuvC with unstacked arms; it has a different conformation from HJ DNA in complex with RuvA. In the full resolvosome a probable DNA-RuvA(4)-RuvB(12)-RuvC(2) complex forms which resolves the HJ. The cofactor is Mg(2+).

The protein resides in the cytoplasm. It carries out the reaction Endonucleolytic cleavage at a junction such as a reciprocal single-stranded crossover between two homologous DNA duplexes (Holliday junction).. Its function is as follows. The RuvA-RuvB-RuvC complex processes Holliday junction (HJ) DNA during genetic recombination and DNA repair. Endonuclease that resolves HJ intermediates. Cleaves cruciform DNA by making single-stranded nicks across the HJ at symmetrical positions within the homologous arms, yielding a 5'-phosphate and a 3'-hydroxyl group; requires a central core of homology in the junction. The consensus cleavage sequence is 5'-(A/T)TT(C/G)-3'. Cleavage occurs on the 3'-side of the TT dinucleotide at the point of strand exchange. HJ branch migration catalyzed by RuvA-RuvB allows RuvC to scan DNA until it finds its consensus sequence, where it cleaves and resolves the cruciform DNA. This is Crossover junction endodeoxyribonuclease RuvC from Pseudomonas paraeruginosa (strain DSM 24068 / PA7) (Pseudomonas aeruginosa (strain PA7)).